A 497-amino-acid polypeptide reads, in one-letter code: Serine carboxypeptidase-like 20 (497 aa).

Positions 1–29 (MSIITMVWLMKVFVFVTLLSLVFVITESA) are cleaved as a signal peptide. Disulfide bonds link Cys90/Cys386, Cys254/Cys266, and Cys289/Cys353. Asn111 and Asn146 each carry an N-linked (GlcNAc...) asparagine glycan. Residue Ser186 is part of the active site. Asn249 carries N-linked (GlcNAc...) asparagine glycosylation. N-linked (GlcNAc...) asparagine glycosylation occurs at Asn405. Residue Asp421 is part of the active site. An N-linked (GlcNAc...) asparagine glycan is attached at Asn463. His474 is an active-site residue. The short motif at 495–497 (SKI) is the Microbody targeting signal element.

Belongs to the peptidase S10 family. In terms of tissue distribution, ubiquitous.

Its subcellular location is the secreted. Probable carboxypeptidase. The protein is Serine carboxypeptidase-like 20 (SCPL20) of Arabidopsis thaliana (Mouse-ear cress).